The following is a 111-amino-acid chain: Large ribosomal subunit protein uL22 (111 aa).

It belongs to the universal ribosomal protein uL22 family. Part of the 50S ribosomal subunit.

In terms of biological role, this protein binds specifically to 23S rRNA; its binding is stimulated by other ribosomal proteins, e.g. L4, L17, and L20. It is important during the early stages of 50S assembly. It makes multiple contacts with different domains of the 23S rRNA in the assembled 50S subunit and ribosome. Functionally, the globular domain of the protein is located near the polypeptide exit tunnel on the outside of the subunit, while an extended beta-hairpin is found that lines the wall of the exit tunnel in the center of the 70S ribosome. In Clostridium acetobutylicum (strain ATCC 824 / DSM 792 / JCM 1419 / IAM 19013 / LMG 5710 / NBRC 13948 / NRRL B-527 / VKM B-1787 / 2291 / W), this protein is Large ribosomal subunit protein uL22.